An 89-amino-acid polypeptide reads, in one-letter code: Small ribosomal subunit protein uS15 (89 aa).

Belongs to the universal ribosomal protein uS15 family. Part of the 30S ribosomal subunit. Forms a bridge to the 50S subunit in the 70S ribosome, contacting the 23S rRNA.

One of the primary rRNA binding proteins, it binds directly to 16S rRNA where it helps nucleate assembly of the platform of the 30S subunit by binding and bridging several RNA helices of the 16S rRNA. In terms of biological role, forms an intersubunit bridge (bridge B4) with the 23S rRNA of the 50S subunit in the ribosome. The sequence is that of Small ribosomal subunit protein uS15 from Magnetococcus marinus (strain ATCC BAA-1437 / JCM 17883 / MC-1).